Here is a 337-residue protein sequence, read N- to C-terminus: Draxin (337 aa).

The N-terminal stretch at 1 to 24 (MLLLALLLLLELSLAGSLGPGSSA) is a signal peptide. Disordered regions lie at residues 36–67 (GPALWTPQASHHRRRGLGKKERGPGTPGWTQD), 107–133 (RPYPEKETQAPGSERVKKRGREHKRRK), and 234–261 (WPSTRKKEKHRGKLSSDGNETSPAKGEP). Composition is skewed to basic residues over residues 122-133 (VKKRGREHKRRK) and 237-246 (TRKKEKHRGK). N-linked (GlcNAc...) asparagine glycosylation is present at asparagine 252.

Belongs to the draxin family. As to quaternary structure, interacts with LRP6.

Its subcellular location is the secreted. Its function is as follows. Chemorepulsive axon guidance protein required for the development of spinal cord and forebrain commissures. Acts as a chemorepulsive guidance protein for commissural axons during development. Able to inhibit or repel neurite outgrowth from dorsal spinal cord. Inhibits the stabilization of cytosolic beta-catenin (CTNNB1) via its interaction with LRP6, thereby acting as an antagonist of Wnt signaling pathway. In Bos taurus (Bovine), this protein is Draxin.